A 37-amino-acid chain; its full sequence is Large ribosomal subunit protein bL36 (37 aa).

It belongs to the bacterial ribosomal protein bL36 family.

The sequence is that of Large ribosomal subunit protein bL36 from Staphylococcus carnosus (strain TM300).